A 296-amino-acid chain; its full sequence is Origin of replication complex subunit 6 (296 aa).

The segment at 212–296 is disordered; that stretch reads PSKRKHDDDS…MALEVSSAAN (85 aa). Acidic residues predominate over residues 220-236; it reads DSDSSGESSGDDQDELD. Residues 254 to 264 show a composition bias toward polar residues; that stretch reads WKSSVLSSNKQ.

The protein belongs to the ORC6 family. In terms of assembly, component of the origin recognition complex (ORC) composed of at least ORC1, ORC2, ORC3, ORC4, ORC5 and ORC6. ORC is regulated in a cell-cycle and development dependent manner. It is sequentially assembled at the exit from anaphase of mitosis and disassembled as cells enter S phase.

It is found in the nucleus. Its function is as follows. Component of the origin recognition complex (ORC) that binds origins of replication. DNA-binding is ATP-dependent. The specific DNA sequences that define origins of replication have not been identified yet. ORC is required to assemble the pre-replication complex necessary to initiate DNA replication. This chain is Origin of replication complex subunit 6, found in Oryza sativa subsp. indica (Rice).